The primary structure comprises 355 residues: NADH dehydrogenase-like protein YutJ (355 aa).

This sequence belongs to the NADH dehydrogenase family. FAD is required as a cofactor.

The chain is NADH dehydrogenase-like protein YutJ (yutJ) from Bacillus subtilis (strain 168).